The following is a 634-amino-acid chain: Microtubule-associated protein 70-2 (634 aa).

The segment at 1–57 (MSDVSGDGDLSATVTEHEVTPQPPVSSATYPSLTVSASYKESSGGKSSSKRRPIRPS) is disordered. Residues 25-35 (VSSATYPSLTV) are compositionally biased toward polar residues. Low complexity predominate over residues 36 to 47 (SASYKESSGGKS). The stretch at 74-392 (DPVKVELNRL…LRLKVLEETL (319 aa)) forms a coiled coil. Positions 258–494 (ILDRMHRQKV…YSFNKATDDS (237 aa)) are required for targeting to microtubules. Polar residues-rich tracts occupy residues 393-417 (RGTS…SRRQ) and 443-464 (MRHS…TSKS). 2 disordered regions span residues 393–526 (RGTS…SVPG) and 594–634 (VEKD…KSTQ). Positions 532–601 (LQKEVVSLRK…MRVEKDQDAR (70 aa)) form a coiled coil. Positions 605–616 (FSNSKSPSNTAQ) are enriched in polar residues.

It belongs to the MAP70 family.

It is found in the cytoplasm. The protein localises to the cytoskeleton. Its function is as follows. Plant-specific protein that interact with microtubules. The protein is Microtubule-associated protein 70-2 (MAP70.2) of Arabidopsis thaliana (Mouse-ear cress).